The primary structure comprises 462 residues: Argininosuccinate lyase (462 aa).

Belongs to the lyase 1 family. Argininosuccinate lyase subfamily.

The protein localises to the cytoplasm. The enzyme catalyses 2-(N(omega)-L-arginino)succinate = fumarate + L-arginine. Its pathway is amino-acid biosynthesis; L-arginine biosynthesis; L-arginine from L-ornithine and carbamoyl phosphate: step 3/3. This chain is Argininosuccinate lyase, found in Bacillus cereus (strain ZK / E33L).